The primary structure comprises 344 residues: Beta-1,4-galactosyltransferase 4 (344 aa).

Topologically, residues 1–12 (MGCNPPYHLSYR) are cytoplasmic. A helical; Signal-anchor for type II membrane protein membrane pass occupies residues 13–38 (LRLLLLFTLCLTVVGWATSNYFVGAI). Over 39–344 (QVIPKAKDFM…NITVDFWTAA (306 aa)) the chain is Lumenal. Cysteines 77 and 118 form a disulfide. Residues 129 to 133 (PHRNR), 168 to 170 (FNR), and 195 to 196 (VD) each bind UDP-alpha-D-galactose. A disulfide bridge links C189 with C208. D196 is a binding site for Mn(2+). N-linked (GlcNAc...) asparagine glycosylation occurs at N220. UDP-alpha-D-galactose contacts are provided by Y224 and W256. 258-261 (GEDD) lines the N-acetyl-D-glucosamine pocket. H289 is a binding site for Mn(2+). UDP-alpha-D-galactose is bound at residue 289-291 (HTR). R301 provides a ligand contact to N-acetyl-D-glucosamine. N-linked (GlcNAc...) asparagine glycosylation occurs at N335.

It belongs to the glycosyltransferase 7 family. As to quaternary structure, interacts with SLC35A2/UGT1. Mn(2+) is required as a cofactor.

It is found in the golgi apparatus membrane. The protein localises to the secreted. It carries out the reaction N-acetyl-D-glucosamine + UDP-alpha-D-galactose = beta-D-galactosyl-(1-&gt;4)-N-acetyl-D-glucosamine + UDP + H(+). The enzyme catalyses a beta-D-GlcNAc-(1-&gt;3)-beta-D-Gal-(1-&gt;4)-beta-D-Glc-(1&lt;-&gt;1)-Cer(d18:1(4E)) + UDP-alpha-D-galactose = a neolactoside nLc4Cer(d18:1(4E)) + UDP + H(+). It catalyses the reaction 3-O-{beta-D-galactosyl-(1-&gt;3)-[6-O-sulfo-N-acetyl-beta-D-glucosaminyl-(1-&gt;6)]-N-acetyl-alpha-D-galactosaminyl}-L-seryl-[protein] + UDP-alpha-D-galactose = 3-O-{beta-D-galactosyl-(1-&gt;3)-[beta-D-galactosyl-(1-&gt;4)-6-O-sulfo-N-acetyl-beta-D-glucosaminyl-(1-&gt;6)]-N-acetyl-alpha-D-galactosaminyl}-L-seryl-[protein] + UDP + H(+). The catalysed reaction is 3-O-{beta-D-galactosyl-(1-&gt;3)-[6-O-sulfo-N-acetyl-beta-D-glucosaminyl-(1-&gt;6)]-N-acetyl-alpha-D-galactosaminyl}-L-threonyl-[protein] + UDP-alpha-D-galactose = 3-O-{beta-D-galactosyl-(1-&gt;3)-[beta-D-galactosyl-(1-&gt;4)-6-O-sulfo-N-acetyl-beta-D-glucosaminyl-(1-&gt;6)]-N-acetyl-alpha-D-galactosaminyl}-L-threonyl-[protein] + UDP + H(+). It functions in the pathway protein modification; protein glycosylation. Its pathway is glycolipid biosynthesis. Galactose (Gal) transferase involved in the synthesis of terminal N-acetyllactosamine (LacNac) unit present on glycan chains of glycoproteins and glycosphingolipids. Catalyzes the transfer of Gal residue via a beta1-&gt;4 linkage from UDP-Gal to the non-reducing terminal N-acetyl glucosamine 6-O-sulfate (6-O-sulfoGlcNAc) in the linearly growing chain of both N- and O-linked keratan sulfate proteoglycans. Cooperates with B3GNT7 N-acetyl glucosamine transferase and CHST6 and CHST1 sulfotransferases to construct and elongate mono- and disulfated disaccharide units [-&gt;3Galbeta1-&gt;4(6-sulfoGlcNAcbeta)1-&gt;] and [-&gt;3(6-sulfoGalbeta)1-&gt;4(6-sulfoGlcNAcbeta)1-&gt;] within keratan sulfate polymer. Transfers Gal residue via a beta1-&gt;4 linkage to terminal 6-O-sulfoGlcNAc within the LacNac unit of core 2 O-glycans forming 6-sulfo-sialyl-Lewis X (sLex). May contribute to the generation of sLex epitope on mucin-type glycoproteins that serve as ligands for SELL/L-selectin, a major regulator of leukocyte migration. In the biosynthesis pathway of neolacto-series glycosphingolipids, transfers Gal residue via a beta1-&gt;4 linkage to terminal GlcNAc of a lactotriaosylceramide (Lc3Cer) acceptor to form a neolactotetraosylceramide. The polypeptide is Beta-1,4-galactosyltransferase 4 (Mus musculus (Mouse)).